A 430-amino-acid polypeptide reads, in one-letter code: Probable GPI-anchored adhesin-like protein PGA32 (430 aa).

The signal sequence occupies residues 1-16; it reads MKVSTLIIVSIPIVSG. Disordered stretches follow at residues 88 to 195, 232 to 257, 278 to 302, and 314 to 336; these read LGQV…TVIN, IASA…RGIK, GGNG…SKYF, and SKSI…SSTD. Low complexity-rich tracts occupy residues 92–112 and 122–135; these read TTPS…PTTS and TDTA…TNAR. Residues 141-167 are compositionally biased toward polar residues; the sequence is TPVTVSGDNVLTLFGNPNLSTGNDQSN. Low complexity-rich tracts occupy residues 168-187 and 233-253; these read SVSK…SSSS and ASAS…SSSA. Positions 289–302 are enriched in polar residues; the sequence is YKNHSTTSTTSKYF. Over residues 314 to 335 the composition is skewed to low complexity; it reads SKSIYSNSTTSRSSLSVSSSST. A lipid anchor (GPI-anchor amidated glycine) is attached at Gly-401. Positions 402-430 are cleaved as a propeptide — removed in mature form; that stretch reads DGNKLIGGNKYLISFMWTNLILTMIMLFT.

It localises to the cell membrane. Putative adhesin which is involved in cell adhesion and virulence. The polypeptide is Probable GPI-anchored adhesin-like protein PGA32 (PGA32) (Candida albicans (strain SC5314 / ATCC MYA-2876) (Yeast)).